Here is a 454-residue protein sequence, read N- to C-terminus: UPF0210 protein EUBREC_1565 (454 aa).

It belongs to the UPF0210 family. In terms of assembly, homodimer.

The polypeptide is UPF0210 protein EUBREC_1565 (Agathobacter rectalis (strain ATCC 33656 / DSM 3377 / JCM 17463 / KCTC 5835 / VPI 0990) (Eubacterium rectale)).